Here is a 312-residue protein sequence, read N- to C-terminus: Olfactory receptor 4F6 (312 aa).

Over 1-25 (MDEANHSVVSEFVFLGLSDSRKIQL) the chain is Extracellular. Asn5 carries an N-linked (GlcNAc...) asparagine glycan. Residues 26–49 (LLFLFFSVFYVSSLMGNLLIVLTV) form a helical membrane-spanning segment. Residues 50-57 (TSDPRLQS) are Cytoplasmic-facing. The chain crosses the membrane as a helical span at residues 58–79 (PMYFLLANLSIINLVFCSSTAP). Residues 80–100 (KMIYDLFRKHKTISFGGCVVQ) lie on the Extracellular side of the membrane. Cysteines 97 and 189 form a disulfide. A helical transmembrane segment spans residues 101-120 (IFFIHAVGGTEMVLLIAMAF). The Cytoplasmic portion of the chain corresponds to 121-139 (DRYVAICKPLHYLTIMNPQ). The chain crosses the membrane as a helical span at residues 140–158 (RCILFLVISWIIGIIHSVI). Residues 159 to 195 (QLAFVVDLLFCGPNELDSFFCDLPRFIKLACIETYTL) are Extracellular-facing. The chain crosses the membrane as a helical span at residues 196-219 (GFMVTANSGFISLASFLILIISYI). The Cytoplasmic segment spans residues 220 to 235 (FILVTVQKKSSGGIFK). The helical transmembrane segment at 236-258 (AFSMLSAHVIVVVLVFGPLIFFY) threads the bilayer. Over 259-269 (IFPFPTSHLDK) the chain is Extracellular. The helical transmembrane segment at 270–289 (FLAIFDAVITPVLNPVIYTF) threads the bilayer. Topologically, residues 290–312 (RNKEMMVAMRRRCSQFVNYSKIF) are cytoplasmic.

It belongs to the G-protein coupled receptor 1 family.

It is found in the cell membrane. Functionally, odorant receptor. The chain is Olfactory receptor 4F6 (OR4F6) from Homo sapiens (Human).